Consider the following 62-residue polypeptide: uncharacterized protein (62 aa).

The chain crosses the membrane as a helical span at residues 37 to 57; the sequence is FILGVILLGVIIESITLLVVY.

It localises to the membrane. This is an uncharacterized protein from Dictyostelium discoideum (Social amoeba).